A 218-amino-acid polypeptide reads, in one-letter code: Elongation factor Ts (218 aa).

An involved in Mg(2+) ion dislocation from EF-Tu region spans residues 82-85 (TDFV).

It belongs to the EF-Ts family.

The protein resides in the cytoplasm. Associates with the EF-Tu.GDP complex and induces the exchange of GDP to GTP. It remains bound to the aminoacyl-tRNA.EF-Tu.GTP complex up to the GTP hydrolysis stage on the ribosome. In Picosynechococcus sp. (strain ATCC 27264 / PCC 7002 / PR-6) (Agmenellum quadruplicatum), this protein is Elongation factor Ts.